The primary structure comprises 129 residues: Iron-sulfur cluster assembly 1 homolog, mitochondrial (129 aa).

Residues 1 to 12 constitute a mitochondrion transit peptide; it reads MSASLVRATVRA. Positions 57, 121, and 123 each coordinate Fe cation.

The protein belongs to the HesB/IscA family. In terms of assembly, interacts with CRY2, but not with CRY1 (in vitro).

It is found in the mitochondrion. Functionally, involved in the maturation of mitochondrial 4Fe-4S proteins functioning late in the iron-sulfur cluster assembly pathway. Probably involved in the binding of an intermediate of Fe/S cluster assembly. The polypeptide is Iron-sulfur cluster assembly 1 homolog, mitochondrial (Isca1) (Rattus norvegicus (Rat)).